A 197-amino-acid polypeptide reads, in one-letter code: MVKIGVIGLQGDVSEHIEATKRALERLGIEGSVIWVKRPEQLNQIDGVIIPGGESTTISRLMQRTGLFDPLKKMIEDGLPAMGTCAGLIMLAKEVIGATPEQKFLEVLDVKVNRNAYGRQVDSFEAPVKLAFDDKPFIGVFIRAPRIVELLSDKVKPLAWLEDRVVGVEQGNVIGLEFHPELTDDTRIHEYFLKKIV.

L-glutamine is bound at residue 53–55; it reads GES. The Nucleophile role is filled by Cys85. L-glutamine contacts are provided by residues Arg114 and 142–143; that span reads IR. Residues His179 and Glu181 each act as charge relay system in the active site.

This sequence belongs to the glutaminase PdxT/SNO family. As to quaternary structure, in the presence of PdxS, forms a dodecamer of heterodimers. Only shows activity in the heterodimer.

It catalyses the reaction aldehydo-D-ribose 5-phosphate + D-glyceraldehyde 3-phosphate + L-glutamine = pyridoxal 5'-phosphate + L-glutamate + phosphate + 3 H2O + H(+). It carries out the reaction L-glutamine + H2O = L-glutamate + NH4(+). It participates in cofactor biosynthesis; pyridoxal 5'-phosphate biosynthesis. Its function is as follows. Catalyzes the hydrolysis of glutamine to glutamate and ammonia as part of the biosynthesis of pyridoxal 5'-phosphate. The resulting ammonia molecule is channeled to the active site of PdxS. The protein is Pyridoxal 5'-phosphate synthase subunit PdxT of Pyrococcus furiosus (strain ATCC 43587 / DSM 3638 / JCM 8422 / Vc1).